The sequence spans 1059 residues: Putative ATP-dependent RNA helicase BoYb (1059 aa).

The Q motif motif lies at R54–S82. The Helicase ATP-binding domain occupies H87–V284. Position 100–107 (G100–T107) interacts with ATP. Positions D230–D233 match the DEAD box motif. The 65-residue stretch at P575–L639 folds into the Tudor domain. The tract at residues V756–P787 is disordered. Over residues Q757–M775 the composition is skewed to basic and acidic residues.

The protein localises to the cytoplasm. It carries out the reaction ATP + H2O = ADP + phosphate + H(+). Involved in primary piRNA biogenesis in germline cells. This chain is Putative ATP-dependent RNA helicase BoYb (BoYb), found in Drosophila melanogaster (Fruit fly).